An 85-amino-acid polypeptide reads, in one-letter code: Small cysteine and glycine repeat-containing protein 5 (85 aa).

A 10 X 2 AA repeats of CG region spans residues 4–69; it reads CGCGGCGGCG…TCCSCGCGCG (66 aa).

Belongs to the KRTAP type 28 family.

Its function is as follows. In the hair cortex, hair keratin intermediate filaments are embedded in an interfilamentous matrix, consisting of hair keratin-associated proteins (KRTAP), which are essential for the formation of a rigid and resistant hair shaft through their extensive disulfide bond cross-linking with abundant cysteine residues of hair keratins. The matrix proteins include the high-sulfur and high-glycine-tyrosine keratins. The chain is Small cysteine and glycine repeat-containing protein 5 from Homo sapiens (Human).